We begin with the raw amino-acid sequence, 297 residues long: N-acetylmuramic acid 6-phosphate etherase (297 aa).

The SIS domain occupies 55 to 218 (AAAALKSGGR…STGAMVKFGK (164 aa)). The active-site Proton donor is the Glu83. The active site involves Glu114.

Belongs to the GCKR-like family. MurNAc-6-P etherase subfamily. As to quaternary structure, homodimer.

It catalyses the reaction N-acetyl-D-muramate 6-phosphate + H2O = N-acetyl-D-glucosamine 6-phosphate + (R)-lactate. It participates in amino-sugar metabolism; 1,6-anhydro-N-acetylmuramate degradation. It functions in the pathway amino-sugar metabolism; N-acetylmuramate degradation. Its pathway is cell wall biogenesis; peptidoglycan recycling. In terms of biological role, specifically catalyzes the cleavage of the D-lactyl ether substituent of MurNAc 6-phosphate, producing GlcNAc 6-phosphate and D-lactate. Together with AnmK, is also required for the utilization of anhydro-N-acetylmuramic acid (anhMurNAc) either imported from the medium or derived from its own cell wall murein, and thus plays a role in cell wall recycling. The chain is N-acetylmuramic acid 6-phosphate etherase from Salmonella agona (strain SL483).